Reading from the N-terminus, the 305-residue chain is MVAIIVHGGAGTIRKEERIPKVLEGVREAVLAGWKELKKGSALDAVEEAIKVLEDNPIFNAGTGSVLTIDGKVEMDAAIMRGKTLEAGAVAGIWGVKNPISVARKVMEKTDHVLLVGEGAVKFARIMGFPEYDPTTEERRKQWQELKEKLMKGEVRHWKKLGELIKEHPEVLRSTVGAVAFDGEEVVAGTSTGGVFLKMFGRVGDTPIIGAGTYANEVAGASCTGLGEVAIKLALAKTATDFVRLGLDAQAASEAAIELATKHFGKDTMGIIMVDSRGNVGFAKNTKHMSYAFMKEGMNEPEAGV.

Threonine 175 acts as the Nucleophile in catalysis. Residues 202-205 (RVGD) and 224-227 (TGLG) each bind substrate.

It belongs to the Ntn-hydrolase family. In terms of assembly, heterotetramer of two alpha and two beta chains arranged as a dimer of alpha/beta heterodimers. The uncleaved protein forms homodimers. Post-translationally, autocleaved. Generates the alpha and beta subunits. The N-terminal residue of the beta subunit is thought to be responsible for the nucleophile hydrolase activity.

The catalysed reaction is L-asparagine + H2O = L-aspartate + NH4(+). Its function is as follows. Catalyzes the hydrolysis of L-asparagine into L-aspartate and ammonia. Does not exhibit glutaminase activity. This is Plant-type L-asparaginase from Pyrococcus abyssi (strain GE5 / Orsay).